A 277-amino-acid chain; its full sequence is F41 fimbrial protein (277 aa).

Residues 1-22 (MKKTLIALAVAASAAVSGSVMA) form the signal peptide.

This sequence belongs to the fimbrial K88 protein family.

It is found in the fimbrium. Functionally, fimbriae (also called pili), polar filaments radiating from the surface of the bacterium to a length of 0.5-1.5 micrometers and numbering 100-300 per cell, enable bacteria to colonize the epithelium of specific host organs. This Escherichia coli protein is F41 fimbrial protein (FimF41a).